The following is a 329-amino-acid chain: Ketol-acid reductoisomerase (NADP(+)) (329 aa).

One can recognise a KARI N-terminal Rossmann domain in the interval 1–181 (MKVYYENDAD…GATRSGVLQT (181 aa)). Residues 24–27 (YGSQ), Arg47, and 82–85 (DQVQ) each bind NADP(+). His107 is an active-site residue. Gly133 lines the NADP(+) pocket. Residues 182-327 (TFREETETDL…GELRKMMSWL (146 aa)) enclose the KARI C-terminal knotted domain. The Mg(2+) site is built by Asp190, Glu194, Glu226, and Glu230. Residue Ser251 participates in substrate binding.

It belongs to the ketol-acid reductoisomerase family. Mg(2+) serves as cofactor.

It carries out the reaction (2R)-2,3-dihydroxy-3-methylbutanoate + NADP(+) = (2S)-2-acetolactate + NADPH + H(+). It catalyses the reaction (2R,3R)-2,3-dihydroxy-3-methylpentanoate + NADP(+) = (S)-2-ethyl-2-hydroxy-3-oxobutanoate + NADPH + H(+). Its pathway is amino-acid biosynthesis; L-isoleucine biosynthesis; L-isoleucine from 2-oxobutanoate: step 2/4. The protein operates within amino-acid biosynthesis; L-valine biosynthesis; L-valine from pyruvate: step 2/4. In terms of biological role, involved in the biosynthesis of branched-chain amino acids (BCAA). Catalyzes an alkyl-migration followed by a ketol-acid reduction of (S)-2-acetolactate (S2AL) to yield (R)-2,3-dihydroxy-isovalerate. In the isomerase reaction, S2AL is rearranged via a Mg-dependent methyl migration to produce 3-hydroxy-3-methyl-2-ketobutyrate (HMKB). In the reductase reaction, this 2-ketoacid undergoes a metal-dependent reduction by NADPH to yield (R)-2,3-dihydroxy-isovalerate. The sequence is that of Ketol-acid reductoisomerase (NADP(+)) from Maridesulfovibrio salexigens (strain ATCC 14822 / DSM 2638 / NCIMB 8403 / VKM B-1763) (Desulfovibrio salexigens).